Here is a 277-residue protein sequence, read N- to C-terminus: Large ribosomal subunit protein uL2 (277 aa).

The interval 226–277 (MNPVDHPHGGGEGRSPIGMPSPVTPWGKPTLGYKTRKPNKKSDRLIVSRRKK) is disordered.

This sequence belongs to the universal ribosomal protein uL2 family. In terms of assembly, part of the 50S ribosomal subunit. Forms a bridge to the 30S subunit in the 70S ribosome.

Its function is as follows. One of the primary rRNA binding proteins. Required for association of the 30S and 50S subunits to form the 70S ribosome, for tRNA binding and peptide bond formation. It has been suggested to have peptidyltransferase activity; this is somewhat controversial. Makes several contacts with the 16S rRNA in the 70S ribosome. This Symbiobacterium thermophilum (strain DSM 24528 / JCM 14929 / IAM 14863 / T) protein is Large ribosomal subunit protein uL2.